The primary structure comprises 271 residues: Bis(5'-nucleosyl)-tetraphosphatase, symmetrical (271 aa).

Belongs to the Ap4A hydrolase family.

The catalysed reaction is P(1),P(4)-bis(5'-adenosyl) tetraphosphate + H2O = 2 ADP + 2 H(+). In terms of biological role, hydrolyzes diadenosine 5',5'''-P1,P4-tetraphosphate to yield ADP. The polypeptide is Bis(5'-nucleosyl)-tetraphosphatase, symmetrical (Aliivibrio fischeri (strain MJ11) (Vibrio fischeri)).